A 425-amino-acid chain; its full sequence is COP9 signalosome complex subunit 1 (425 aa).

The 161-residue stretch at 219 to 379 (ASSGVPPEIY…KSKALQTLEN (161 aa)) folds into the PCI domain.

The protein belongs to the CSN1 family. In terms of assembly, component of the COP9 signalosome (CSN) complex.

It is found in the cytoplasm. Its subcellular location is the nucleus. Component of the COP9 signalosome (CSN) complex that acts as an regulator of the ubiquitin (Ubl) conjugation pathway by mediating the deneddylation of the cullin subunit of SCF-type E3 ubiquitin-protein ligase complexes. The CSN complex is involved in the regulation of the circadian clock through its control of the stability of the SCF(FWD-1) complex. The polypeptide is COP9 signalosome complex subunit 1 (csn-1) (Neurospora crassa (strain ATCC 24698 / 74-OR23-1A / CBS 708.71 / DSM 1257 / FGSC 987)).